The sequence spans 166 residues: Phosphopantetheine adenylyltransferase (166 aa).

T14 serves as a coordination point for substrate. ATP is bound by residues 14–15 and H22; that span reads TF. Positions 46, 78, and 92 each coordinate substrate. ATP-binding positions include 93-95, E103, and 128-134; these read GLR and WMYLSSS.

It belongs to the bacterial CoaD family. In terms of assembly, homohexamer. It depends on Mg(2+) as a cofactor.

It localises to the cytoplasm. The catalysed reaction is (R)-4'-phosphopantetheine + ATP + H(+) = 3'-dephospho-CoA + diphosphate. The protein operates within cofactor biosynthesis; coenzyme A biosynthesis; CoA from (R)-pantothenate: step 4/5. Its function is as follows. Reversibly transfers an adenylyl group from ATP to 4'-phosphopantetheine, yielding dephospho-CoA (dPCoA) and pyrophosphate. The polypeptide is Phosphopantetheine adenylyltransferase (Maridesulfovibrio salexigens (strain ATCC 14822 / DSM 2638 / NCIMB 8403 / VKM B-1763) (Desulfovibrio salexigens)).